The primary structure comprises 779 residues: Neutral ceramidase 1 (779 aa).

The active-site Nucleophile is Ser350. N-linked (GlcNAc...) asparagine glycosylation is found at Asn368, Asn432, and Asn667.

The protein belongs to the neutral ceramidase family. In terms of tissue distribution, mostly expressed in stems, leaves, roots and siliques, and, to a lower extent, in flowers.

The protein localises to the secreted. The protein resides in the endoplasmic reticulum. It localises to the golgi apparatus. It catalyses the reaction an N-acylsphing-4-enine + H2O = sphing-4-enine + a fatty acid. Functionally, hydrolyzes the sphingolipid ceramide into sphingosine and free fatty acid. Regulates sphingolipid homeostasis. Promotes oxidative stress resistance. This is Neutral ceramidase 1 from Arabidopsis thaliana (Mouse-ear cress).